A 403-amino-acid polypeptide reads, in one-letter code: Methylthioribose-1-phosphate isomerase (403 aa).

Aspartate 280 serves as the catalytic Proton donor.

This sequence belongs to the eIF-2B alpha/beta/delta subunits family. MtnA subfamily.

It is found in the cytoplasm. Its subcellular location is the nucleus. The catalysed reaction is 5-(methylsulfanyl)-alpha-D-ribose 1-phosphate = 5-(methylsulfanyl)-D-ribulose 1-phosphate. It participates in amino-acid biosynthesis; L-methionine biosynthesis via salvage pathway; L-methionine from S-methyl-5-thio-alpha-D-ribose 1-phosphate: step 1/6. Functionally, catalyzes the interconversion of methylthioribose-1-phosphate (MTR-1-P) into methylthioribulose-1-phosphate (MTRu-1-P). The sequence is that of Methylthioribose-1-phosphate isomerase from Eremothecium gossypii (strain ATCC 10895 / CBS 109.51 / FGSC 9923 / NRRL Y-1056) (Yeast).